We begin with the raw amino-acid sequence, 288 residues long: Peroxisomal protein PEX21 (288 aa).

Cysteine 5 is covalently cross-linked (Glycyl cysteine thioester (Cys-Gly) (interchain with G-Cter in ubiquitin)).

It belongs to the peroxin-21 family. As to quaternary structure, interacts with PEX7. Interacts with PEX13. Interacts with SES1. In terms of processing, monoubiquitinated at Cys-5; acts as a signal for PEX21 extraction and is required for proper export from peroxisomes and recycling.

It localises to the cytoplasm. The protein resides in the cytosol. It is found in the peroxisome. In terms of biological role, receptor that mediates peroxisomal import of proteins containing a C-terminal PTS2-type peroxisomal targeting signal via its interaction with PEX7. Interaction with PEX7 only takes place when PEX7 is associated with cargo proteins containing a PTS2 peroxisomal targeting signal. PEX7 along with PTS2-containing cargo proteins are then translocated through the PEX13-PEX14 docking complex together with PEX21. Acts as an activator of the seryl-tRNA synthetase SES1 by increasing its binding to tRNA. This is Peroxisomal protein PEX21 (PEX21) from Saccharomyces cerevisiae (strain ATCC 204508 / S288c) (Baker's yeast).